A 138-amino-acid polypeptide reads, in one-letter code: Enhancer of split malpha protein (138 aa).

Belongs to the M4-like protein family.

Its function is as follows. Part of the Notch signaling pathway. In Drosophila melanogaster (Fruit fly), this protein is Enhancer of split malpha protein.